The chain runs to 391 residues: MDLIETVNACVKLQKRVLGLAPNTNLNTAEQSVLNDYNALPSRVNGKTYALLNQIAVYTPYTINAPIISLAVRISTDDYDDMRSGIESILDVLAAAIRTEGSRPTRVIERRVLEQNVKQLVDDLRLKSLISDLSIANLAAVDTAMIQPEVIETENPLYADIIEQIVHRPNIGMNGGNIRATLGRWSGNKGVVTCMSGMDSEHRFTVELKTRTCGIINIVYIPTAGTILIPMPAGRNREGDLIDVSAEMMADDFAIDFMDDDKIIQTETGVGVYSFPMCNRIRFRINPWNTQKDDDNLGTVHMINWAQGTAPKQPAISFMFETRRTFTEGNYQHLSRCAPKAQYMMDTQFNDVSFTNRPAVDWNIQSLLTSNTQRVWCQKIAMLIAAFAAKI.

This sequence belongs to the rotavirus VP6 family. Homotrimer. Interacts with the inner capsid protein VP2. Interacts with the outer capsid glycoprotein VP7.

Its subcellular location is the virion. Intermediate capsid protein that self assembles to form an icosahedral capsid with a T=13 symmetry, which consists of 230 trimers of VP6, with channels at each of its five-fold vertices. This capsid constitutes the middle concentric layer of the viral mature particle. The innermost VP2 capsid and the intermediate VP6 capsid remain intact following cell entry to protect the dsRNA from degradation and to prevent unfavorable antiviral responses in the host cell during all the replication cycle of the virus. Nascent transcripts are transcribed within the structural confines of this double-layered particle (DLP) and are extruded through the channels at the five-fold axes. VP6 is required for the transcription activity of the DLP. The sequence is that of Intermediate capsid protein VP6 from Homo sapiens (Human).